The chain runs to 171 residues: Envelope glycoprotein N (171 aa).

Topologically, residues 1 to 132 are virion surface; sequence MARINSNSGT…CSALKYRIYV (132 aa). The helical transmembrane segment at 133-153 threads the bilayer; sequence SSFVSVLNIILYVLLFLASVV. At 154-171 the chain is on the intravirion side; the sequence is YIRYLCHQSITTETVKDY.

The protein belongs to the herpesviridae glycoprotein N family. As to quaternary structure, interacts (via N-terminus) with gM (via N-terminus). The gM-gN heterodimer forms the gCII complex.

The protein localises to the virion membrane. It localises to the host membrane. The protein resides in the host Golgi apparatus. Its subcellular location is the host trans-Golgi network. Envelope glycoprotein necessary for proper maturation of gM and modulation of its membrane fusion activity. Also plays a critical role in virion morphogenesis. The chain is Envelope glycoprotein N from Elephas maximus (Indian elephant).